Reading from the N-terminus, the 480-residue chain is NADH-quinone oxidoreductase subunit N (480 aa).

13 helical membrane passes run 5-25, 40-60, 69-89, 110-130, 162-182, 204-224, 237-257, 266-286, 296-316, 324-344, 368-388, 404-424, and 450-470; these read NFLCIEQELKLIALLVILFLY, IAIVGFAIVIISEFPPYFTMY, ISSQLTFFMKSILNVATFLVF, VIMLISLLGMYFMISAENFVM, YILTSALSSGVMLFGLSFLYG, LGFVFFFGGLGFKLSLVPFHL, VTAYLSVVSKGAATFALIFVL, LIWNNILCWLLLATIVLGNLF, FFAFSSISQAGYILLGIIAGT, IFYTLVYLFSNLAAFGVIASV, AFVMMLAVFSLGGIPPFAGFF, ILVFIALLNTVMSLYYYLLIV, and MVICTIGIFVIGFLSAIYEYI.

This sequence belongs to the complex I subunit 2 family. In terms of assembly, NDH-1 is composed of 14 different subunits. Subunits NuoA, H, J, K, L, M, N constitute the membrane sector of the complex.

The protein localises to the cell inner membrane. The enzyme catalyses a quinone + NADH + 5 H(+)(in) = a quinol + NAD(+) + 4 H(+)(out). Functionally, NDH-1 shuttles electrons from NADH, via FMN and iron-sulfur (Fe-S) centers, to quinones in the respiratory chain. The immediate electron acceptor for the enzyme in this species is believed to be a menaquinone. Couples the redox reaction to proton translocation (for every two electrons transferred, four hydrogen ions are translocated across the cytoplasmic membrane), and thus conserves the redox energy in a proton gradient. This is NADH-quinone oxidoreductase subunit N from Azobacteroides pseudotrichonymphae genomovar. CFP2.